A 554-amino-acid chain; its full sequence is Alpha-taxilin (554 aa).

Residues 1–66 are disordered; it reads MKNQDKKNGP…ARAKAAQPGA (66 aa). Phosphoserine is present on serine 71. The segment at 85–166 is disordered; sequence YCVDNNQGGP…RRPQEKKKAK (82 aa). Over residues 91–103 the composition is skewed to low complexity; the sequence is QGGPAEEGAQGEP. Residues 143 to 158 are compositionally biased toward basic and acidic residues; that stretch reads EEIRASDEVGDRDHRR. The stretch at 186–491 forms a coiled coil; it reads EEKLAALCKK…NKRVQDLTAG (306 aa). Positions 492–554 are disordered; that stretch reads GITDIGSERR…GPGEPTPATA (63 aa). Residues serine 515 and serine 523 each carry the phosphoserine modification.

The protein belongs to the taxilin family. Binds to the C-terminal coiled coil region of syntaxin family members STX1A, STX3A and STX4A, but not when these proteins are complexed with SNAP25, VAMP2 or STXBP1, suggesting that it interacts with syntaxins that do not form the SNARE complex.

In terms of biological role, may be involved in intracellular vesicle traffic and potentially in calcium-dependent exocytosis in neuroendocrine cells. This is Alpha-taxilin (Txlna) from Mus musculus (Mouse).